The chain runs to 254 residues: Phytolongin Phyl1.1 (254 aa).

The 102-residue stretch at 12–113 (CVSRDNQILY…TAMIGSINVE (102 aa)) folds into the Longin domain. The disordered stretch occupies residues 138 to 173 (ELKSSNLGEQSEGSNSTKAPLLGRLSKQEKKKGKDH). The segment covering 145–155 (GEQSEGSNSTK) has biased composition (polar residues). A helical; Anchor for type IV membrane protein membrane pass occupies residues 226–246 (IVLAIDAAICLTLFGIWLAIC).

This sequence belongs to the synaptobrevin family.

It is found in the membrane. In terms of biological role, non-SNARE longin protein involved in membrane-trafficking machinery. The polypeptide is Phytolongin Phyl1.1 (Arabidopsis thaliana (Mouse-ear cress)).